The following is a 946-amino-acid chain: Protein translocase subunit SecA (946 aa).

ATP contacts are provided by residues Q87, 105-109, and D524; that span reads GEGKT. Residues 905–926 are disordered; it reads APASDAAQRDPKNPASWGKIGR. Positions 930, 932, 941, and 942 each coordinate Zn(2+).

This sequence belongs to the SecA family. As to quaternary structure, monomer and homodimer. Part of the essential Sec protein translocation apparatus which comprises SecA, SecYEG and auxiliary proteins SecDF-YajC and YidC. It depends on Zn(2+) as a cofactor.

Its subcellular location is the cell inner membrane. It is found in the cytoplasm. The catalysed reaction is ATP + H2O + cellular proteinSide 1 = ADP + phosphate + cellular proteinSide 2.. Part of the Sec protein translocase complex. Interacts with the SecYEG preprotein conducting channel. Has a central role in coupling the hydrolysis of ATP to the transfer of proteins into and across the cell membrane, serving both as a receptor for the preprotein-SecB complex and as an ATP-driven molecular motor driving the stepwise translocation of polypeptide chains across the membrane. The sequence is that of Protein translocase subunit SecA from Bradyrhizobium diazoefficiens (strain JCM 10833 / BCRC 13528 / IAM 13628 / NBRC 14792 / USDA 110).